The chain runs to 144 residues: Maximins 5/H4 type 3 (144 aa).

The signal sequence occupies residues 1 to 18 (MNFKYIVAVSFLIASAYA). 2 consecutive propeptides follow at residues 19–43 (RSVQNDEQSLSQRDVLEEESLREIR) and 74–123 (TAED…KEKR). Leucine 143 carries the leucine amide modification.

Belongs to the bombinin family. In terms of tissue distribution, expressed by the skin glands.

It localises to the secreted. Maximin-5 shows antibacterial activity against both Gram-positive and Gram-negative bacteria. The only exception is the resistance of E.coli. Also shows antimicrobial activity against fungi C.albicans, A.flavus and P.uticale. It has little hemolytic activity. It does not possess a significant cytotoxicity against tumor cell lines. It does not possess a significant anti-HIV activity. Functionally, maximin-H4 shows antibacterial activity against both Gram-positive and Gram-negative bacteria. It also shows antimicrobial activity against the fungus C.albicans. Shows strong hemolytic activity. In Bombina maxima (Giant fire-bellied toad), this protein is Maximins 5/H4 type 3.